Reading from the N-terminus, the 273-residue chain is NAD-dependent protein deacetylase 2 (273 aa).

One can recognise a Deacetylase sirtuin-type domain in the interval 1-273; the sequence is MSNAPLANQS…RCEAALAFLL (273 aa). NAD(+)-binding positions include 26 to 46 and 104 to 107; these read GAGC…GNWK and QNVD. Catalysis depends on histidine 122, which acts as the Proton acceptor. Zn(2+)-binding residues include cysteine 130, cysteine 133, cysteine 181, and cysteine 184. NAD(+) contacts are provided by residues 221 to 223, 247 to 249, and cysteine 265; these read GSS and NLG.

Belongs to the sirtuin family. Class II subfamily. It depends on Zn(2+) as a cofactor.

The protein localises to the cytoplasm. It catalyses the reaction N(6)-acetyl-L-lysyl-[protein] + NAD(+) + H2O = 2''-O-acetyl-ADP-D-ribose + nicotinamide + L-lysyl-[protein]. In terms of biological role, NAD-dependent protein deacetylase which modulates the activities of several enzymes which are inactive in their acetylated form. This chain is NAD-dependent protein deacetylase 2, found in Bradyrhizobium diazoefficiens (strain JCM 10833 / BCRC 13528 / IAM 13628 / NBRC 14792 / USDA 110).